Reading from the N-terminus, the 217-residue chain is Methylthioribulose-1-phosphate dehydratase (217 aa).

Zn(2+) is bound by residues H106 and H108.

Belongs to the aldolase class II family. MtnB subfamily. Zn(2+) serves as cofactor.

It catalyses the reaction 5-(methylsulfanyl)-D-ribulose 1-phosphate = 5-methylsulfanyl-2,3-dioxopentyl phosphate + H2O. Its pathway is amino-acid biosynthesis; L-methionine biosynthesis via salvage pathway; L-methionine from S-methyl-5-thio-alpha-D-ribose 1-phosphate: step 2/6. Catalyzes the dehydration of methylthioribulose-1-phosphate (MTRu-1-P) into 2,3-diketo-5-methylthiopentyl-1-phosphate (DK-MTP-1-P). This Xanthomonas campestris pv. campestris (strain 8004) protein is Methylthioribulose-1-phosphate dehydratase.